Here is a 359-residue protein sequence, read N- to C-terminus: 3-dehydroquinate synthase (359 aa).

NAD(+) is bound by residues 106 to 110, 130 to 131, Lys-143, and Lys-152; these read GVVGD and TS. The Zn(2+) site is built by Glu-185, His-246, and His-262.

This sequence belongs to the sugar phosphate cyclases superfamily. Dehydroquinate synthase family. NAD(+) is required as a cofactor. Co(2+) serves as cofactor. It depends on Zn(2+) as a cofactor.

Its subcellular location is the cytoplasm. It carries out the reaction 7-phospho-2-dehydro-3-deoxy-D-arabino-heptonate = 3-dehydroquinate + phosphate. The protein operates within metabolic intermediate biosynthesis; chorismate biosynthesis; chorismate from D-erythrose 4-phosphate and phosphoenolpyruvate: step 2/7. Its function is as follows. Catalyzes the conversion of 3-deoxy-D-arabino-heptulosonate 7-phosphate (DAHP) to dehydroquinate (DHQ). The chain is 3-dehydroquinate synthase from Lactiplantibacillus plantarum (strain ATCC BAA-793 / NCIMB 8826 / WCFS1) (Lactobacillus plantarum).